The chain runs to 271 residues: Formamidopyrimidine-DNA glycosylase (271 aa).

P2 (schiff-base intermediate with DNA) is an active-site residue. E3 serves as the catalytic Proton donor. The active-site Proton donor; for beta-elimination activity is K57. 3 residues coordinate DNA: H90, R109, and K151. Residues 236–270 form an FPG-type zinc finger; the sequence is HVYGRGGETCTSCGNLLSEIRLGQRTTVFCGICQT. R260 functions as the Proton donor; for delta-elimination activity in the catalytic mechanism.

Belongs to the FPG family. In terms of assembly, monomer. The cofactor is Zn(2+).

The catalysed reaction is Hydrolysis of DNA containing ring-opened 7-methylguanine residues, releasing 2,6-diamino-4-hydroxy-5-(N-methyl)formamidopyrimidine.. It carries out the reaction 2'-deoxyribonucleotide-(2'-deoxyribose 5'-phosphate)-2'-deoxyribonucleotide-DNA = a 3'-end 2'-deoxyribonucleotide-(2,3-dehydro-2,3-deoxyribose 5'-phosphate)-DNA + a 5'-end 5'-phospho-2'-deoxyribonucleoside-DNA + H(+). Its function is as follows. Involved in base excision repair of DNA damaged by oxidation or by mutagenic agents. Acts as a DNA glycosylase that recognizes and removes damaged bases. Has a preference for oxidized purines, such as 7,8-dihydro-8-oxoguanine (8-oxoG). Has AP (apurinic/apyrimidinic) lyase activity and introduces nicks in the DNA strand. Cleaves the DNA backbone by beta-delta elimination to generate a single-strand break at the site of the removed base with both 3'- and 5'-phosphates. In Shewanella baltica (strain OS155 / ATCC BAA-1091), this protein is Formamidopyrimidine-DNA glycosylase.